We begin with the raw amino-acid sequence, 281 residues long: Diaminopimelate epimerase (281 aa).

Residues Asn13 and Asn66 each contribute to the substrate site. Cys75 serves as the catalytic Proton donor. Substrate contacts are provided by residues 76–77, Asn164, Asn197, and 215–216; these read GN and ER. Cys224 functions as the Proton acceptor in the catalytic mechanism. A substrate-binding site is contributed by 225 to 226; that stretch reads GT.

Belongs to the diaminopimelate epimerase family. As to quaternary structure, homodimer.

It is found in the cytoplasm. The catalysed reaction is (2S,6S)-2,6-diaminopimelate = meso-2,6-diaminopimelate. Its pathway is amino-acid biosynthesis; L-lysine biosynthesis via DAP pathway; DL-2,6-diaminopimelate from LL-2,6-diaminopimelate: step 1/1. Catalyzes the stereoinversion of LL-2,6-diaminopimelate (L,L-DAP) to meso-diaminopimelate (meso-DAP), a precursor of L-lysine and an essential component of the bacterial peptidoglycan. The polypeptide is Diaminopimelate epimerase (Gloeothece citriformis (strain PCC 7424) (Cyanothece sp. (strain PCC 7424))).